The sequence spans 175 residues: Acireductone dioxygenase (175 aa).

Fe(2+) is bound by residues histidine 81, histidine 83, glutamate 87, and histidine 126. Residues histidine 81, histidine 83, glutamate 87, and histidine 126 each contribute to the Ni(2+) site.

This sequence belongs to the acireductone dioxygenase (ARD) family. Fe(2+) serves as cofactor. The cofactor is Ni(2+).

Its subcellular location is the cytoplasm. It is found in the nucleus. It carries out the reaction 1,2-dihydroxy-5-(methylsulfanyl)pent-1-en-3-one + O2 = 4-methylsulfanyl-2-oxobutanoate + formate + 2 H(+). It catalyses the reaction 1,2-dihydroxy-5-(methylsulfanyl)pent-1-en-3-one + O2 = 3-(methylsulfanyl)propanoate + CO + formate + 2 H(+). Its pathway is amino-acid biosynthesis; L-methionine biosynthesis via salvage pathway; L-methionine from S-methyl-5-thio-alpha-D-ribose 1-phosphate: step 5/6. In terms of biological role, catalyzes 2 different reactions between oxygen and the acireductone 1,2-dihydroxy-3-keto-5-methylthiopentene (DHK-MTPene) depending upon the metal bound in the active site. Fe-containing acireductone dioxygenase (Fe-ARD) produces formate and 2-keto-4-methylthiobutyrate (KMTB), the alpha-ketoacid precursor of methionine in the methionine recycle pathway. Ni-containing acireductone dioxygenase (Ni-ARD) produces methylthiopropionate, carbon monoxide and formate, and does not lie on the methionine recycle pathway. The chain is Acireductone dioxygenase from Phaeosphaeria nodorum (strain SN15 / ATCC MYA-4574 / FGSC 10173) (Glume blotch fungus).